Reading from the N-terminus, the 154-residue chain is Protein disulfide-isomerase LQY1, chloroplastic (154 aa).

The N-terminal 43 residues, 1–43 (MPVSAPSPPRLHSPFIHCPINFTPSSFSARNLRSPSTSYPRIK), are a transit peptide targeting the chloroplast. The helical transmembrane segment at 51-71 (VVAISVGVASVALGIGIPVFY) threads the bilayer. The CR-type zinc-finger motif lies at 77–147 (NAAKRENTQP…SGVQPRYLDR (71 aa)). Positions 87, 90, 98, 101, 121, 124, 132, and 135 each coordinate Zn(2+).

It belongs to the BSD2 chaperone family. In terms of assembly, interacts with the photosystem II core subunits. Interacts with HHL1. It depends on Zn(2+) as a cofactor.

Its subcellular location is the plastid. The protein localises to the chloroplast thylakoid membrane. The enzyme catalyses Catalyzes the rearrangement of -S-S- bonds in proteins.. Functionally, protein disulfide-isomerase probably involved upon formation of a complex with HHL1 in maintaining photosystem II (PSII) activity under high light by regulating repair and reassembly of PSII complexes. This chain is Protein disulfide-isomerase LQY1, chloroplastic, found in Arabidopsis thaliana (Mouse-ear cress).